The sequence spans 467 residues: MLLSAPVNSTVRRKPHSPNKKKPKETGTAASFSSSSSTVVLSSNNDGSFDALWDPSISKASDFESSYISAKRLKPESSNRQKKKNSYKYSREENTNEVEEKTSLGSSSKTEADNIFNDQLTSAGNTTYVSNKRDVNFGANSAVVLLGLPTSKSESHRQYHSPSASTTNEDEEDIGVDILVDNHIDSCETVSINNNRGITHQYPETESDVDFDEAVILTPMDGTDKGVKNPRPLEKKYSSSCFEDRTPLNLDDGHFSECNHFSTLDVSSFFHLNEHVHKIDEVELDGPDRTFSLDNVAINTRKKDIDCLYNSSREDLSNLTCSSEGPRNDSYDSDYNIDEVTYRDDESTDEDESLPTPDRKRKKIGHKACEILDSKRIGIKVPKLYVWSLSDKPFSVIDGLCTKSLYPLSDDINTPESLSSCSSSVSSRENQKGDATFDNDAMIADLLNIGGLEVEKASNGHIELIGE.

A compositionally biased stretch (polar residues) spans 1-10 (MLLSAPVNST). Disordered regions lie at residues 1 to 42 (MLLS…VVLS), 62 to 110 (DFES…SSKT), 151 to 170 (SKSE…TNED), and 341 to 361 (TYRD…DRKR). Basic residues predominate over residues 11-23 (VRRKPHSPNKKKP). The segment covering 28–42 (TAASFSSSSSTVVLS) has biased composition (low complexity). Over residues 89–102 (YSREENTNEVEEKT) the composition is skewed to basic and acidic residues.

In terms of assembly, interacts with FHL1 to form a repressor complex. The formation of the CRF1-FHL1 complex is inhibited by the TOR pathway. In terms of processing, phosphorylated by CDC28 and YAK1.

It localises to the cytoplasm. The protein resides in the nucleus. Its function is as follows. Transcription factor, corepressor with FHL1 of ribosomal protein genes. May be involved in the blocking of the spread of silencing. This Saccharomyces cerevisiae (strain ATCC 204508 / S288c) (Baker's yeast) protein is Transcription factor CRF1 (CRF1).